The chain runs to 210 residues: MPSSTSPALFPILYLASQSPRRQELLLQIGVRFELLLPRPDEDAEALEAELPGEAADAYVRRVTVAKAEAARARLVASGKPAAPVLVADTTVTIDGAILGKPADADDALAMLTRLAGREHEVLTAVAVIGADGELLPPALSRSSVRFSNAQRDAYVRYVETGEPFGKAGAYAIQGRAAEFIERIDGSHSGIMGLPLFETAALLRTARVAF.

The Proton acceptor role is filled by Asp-89.

The protein belongs to the Maf family. YhdE subfamily. A divalent metal cation serves as cofactor.

The protein resides in the cytoplasm. The enzyme catalyses dTTP + H2O = dTMP + diphosphate + H(+). It catalyses the reaction UTP + H2O = UMP + diphosphate + H(+). Functionally, nucleoside triphosphate pyrophosphatase that hydrolyzes dTTP and UTP. May have a dual role in cell division arrest and in preventing the incorporation of modified nucleotides into cellular nucleic acids. This chain is dTTP/UTP pyrophosphatase, found in Burkholderia orbicola (strain AU 1054).